The following is a 177-amino-acid chain: Nucleoside triphosphate/diphosphate phosphatase (177 aa).

Arg-23 serves as the catalytic Proton donor. Mg(2+) is bound by residues Asn-87, Asp-103, Asp-105, Asp-107, Asp-120, and Glu-123.

Belongs to the Ntdp family. Mg(2+) is required as a cofactor.

It carries out the reaction a ribonucleoside 5'-triphosphate + H2O = a ribonucleoside 5'-diphosphate + phosphate + H(+). The enzyme catalyses a ribonucleoside 5'-diphosphate + H2O = a ribonucleoside 5'-phosphate + phosphate + H(+). Functionally, has nucleoside phosphatase activity towards nucleoside triphosphates and nucleoside diphosphates. In Streptococcus equi subsp. zooepidemicus (strain MGCS10565), this protein is Nucleoside triphosphate/diphosphate phosphatase.